Reading from the N-terminus, the 65-residue chain is Putative cytochrome c oxidase subunit 5C-4 (65 aa).

Residues Glu-20–Met-37 traverse the membrane as a helical segment.

Belongs to the cytochrome c oxidase subunit 5C family.

Its subcellular location is the mitochondrion inner membrane. Its function is as follows. This protein is one of the nuclear-coded polypeptide chains of cytochrome c oxidase, the terminal oxidase in mitochondrial electron transport. This Arabidopsis thaliana (Mouse-ear cress) protein is Putative cytochrome c oxidase subunit 5C-4.